We begin with the raw amino-acid sequence, 424 residues long: CinA-like protein (424 aa).

It belongs to the CinA family.

The chain is CinA-like protein from Shewanella halifaxensis (strain HAW-EB4).